The primary structure comprises 521 residues: Glucose-6-phosphate isomerase (521 aa).

Glu351 serves as the catalytic Proton donor. Residues His382 and Lys491 contribute to the active site.

This sequence belongs to the GPI family.

Its subcellular location is the cytoplasm. It carries out the reaction alpha-D-glucose 6-phosphate = beta-D-fructose 6-phosphate. Its pathway is carbohydrate biosynthesis; gluconeogenesis. It participates in carbohydrate degradation; glycolysis; D-glyceraldehyde 3-phosphate and glycerone phosphate from D-glucose: step 2/4. Its function is as follows. Catalyzes the reversible isomerization of glucose-6-phosphate to fructose-6-phosphate. The chain is Glucose-6-phosphate isomerase from Polaromonas naphthalenivorans (strain CJ2).